The primary structure comprises 232 residues: Probable fimbrial chaperone LpfB (232 aa).

Residues 1-24 form the signal peptide; it reads MDRMMKSKFVALALSLFLSQSVLA.

The protein belongs to the periplasmic pilus chaperone family.

It localises to the periplasm. Its function is as follows. Part of the lpfABCC'DE fimbrial operon. LP fimbriae may participate in the interaction with eukaryotic cells by assisting in microcolony formation. This chain is Probable fimbrial chaperone LpfB (lpfB), found in Escherichia coli O157:H7.